Consider the following 318-residue polypeptide: Beta-ketoacyl-[acyl-carrier-protein] synthase III (318 aa).

Catalysis depends on residues C112 and H245. Residues 246 to 250 (QANLR) are ACP-binding. N275 is an active-site residue.

The protein belongs to the thiolase-like superfamily. FabH family. In terms of assembly, homodimer.

It localises to the cytoplasm. It catalyses the reaction malonyl-[ACP] + acetyl-CoA + H(+) = 3-oxobutanoyl-[ACP] + CO2 + CoA. It participates in lipid metabolism; fatty acid biosynthesis. In terms of biological role, catalyzes the condensation reaction of fatty acid synthesis by the addition to an acyl acceptor of two carbons from malonyl-ACP. Catalyzes the first condensation reaction which initiates fatty acid synthesis and may therefore play a role in governing the total rate of fatty acid production. Possesses both acetoacetyl-ACP synthase and acetyl transacylase activities. Its substrate specificity determines the biosynthesis of branched-chain and/or straight-chain of fatty acids. The polypeptide is Beta-ketoacyl-[acyl-carrier-protein] synthase III (Blochmanniella floridana).